A 316-amino-acid chain; its full sequence is Pantothenate kinase (316 aa).

95–102 (GSVAVGKS) is an ATP binding site.

This sequence belongs to the prokaryotic pantothenate kinase family.

It localises to the cytoplasm. The catalysed reaction is (R)-pantothenate + ATP = (R)-4'-phosphopantothenate + ADP + H(+). The protein operates within cofactor biosynthesis; coenzyme A biosynthesis; CoA from (R)-pantothenate: step 1/5. The polypeptide is Pantothenate kinase (Shigella sonnei (strain Ss046)).